Consider the following 263-residue polypeptide: R-spondin-1 (263 aa).

The N-terminal stretch at 1 to 20 (MRLGLCVVALVLSWTHLTIS) is a signal peptide. 2 FU repeats span residues 34 to 85 (AEGS…GYFD) and 91 to 135 (MNKC…GSSA). 11 cysteine pairs are disulfide-bonded: Cys40-Cys47, Cys44-Cys53, Cys56-Cys75, Cys79-Cys94, Cys97-Cys105, Cys102-Cys111, Cys114-Cys125, Cys129-Cys142, Cys148-Cys190, Cys159-Cys166, and Cys199-Cys206. Asn137 is a glycosylation site (N-linked (GlcNAc...) asparagine). The 61-residue stretch at 147 to 207 (QCEMSEWSPW…RCTVRRVPCP (61 aa)) folds into the TSP type-1 domain. 2 C-linked (Man) tryptophan glycosylation sites follow: Trp153 and Trp156. Positions 206-263 (CPEGQKRRKGGQGRRENANRNLARKESKEAGAGSRRRKGQQQQQQQGTVGPLTSAGPA) are disordered. A compositionally biased stretch (basic and acidic residues) spans 218-234 (GRRENANRNLARKESKE).

This sequence belongs to the R-spondin family. As to quaternary structure, interacts with the extracellular domain of FZD8 and LRP6. It however does not form a ternary complex with FZD8 and LRP6. Interacts with WNT1. Binds heparin. Interacts with ZNRF3; promoting indirect interaction between ZNRF3 and LGR4 and membrane clearance of ZNRF3. Interacts with LGR4, LGR5 and LGR6. Identified in a complex composed of RNF43, LGR5 and RSPO1. Interacts (via FU repeats) with KREM1. C-, and N-glycosylated. N-glycosylation at Asn-137, negatively influences its secretion and enhancing effect on Wnt/beta-catenin signaling. C-mannosylation at Trp-156 by DPY19L3 is required for its secretion and regulates the enhancing activity of Wnt signaling. In terms of tissue distribution, abundantly expressed in adrenal glands, ovary, testis, thyroid and trachea but not in bone marrow, spinal cord, stomach, leukocytes colon, small intestine, prostate, thymus and spleen.

The protein localises to the secreted. The protein resides in the nucleus. In terms of biological role, activator of the canonical Wnt signaling pathway by acting as a ligand for LGR4-6 receptors. Upon binding to LGR4-6 (LGR4, LGR5 or LGR6), LGR4-6 associate with phosphorylated LRP6 and frizzled receptors that are activated by extracellular Wnt receptors, triggering the canonical Wnt signaling pathway to increase expression of target genes. Also regulates the canonical Wnt/beta-catenin-dependent pathway and non-canonical Wnt signaling by acting as an inhibitor of ZNRF3, an important regulator of the Wnt signaling pathway. Acts as a ligand for frizzled FZD8 and LRP6. May negatively regulate the TGF-beta pathway. Has a essential roles in ovary determination. Regulates Wnt signaling by antagonizing DKK1/KREM1-mediated internalization of LRP6 through an interaction with KREM1. The polypeptide is R-spondin-1 (RSPO1) (Homo sapiens (Human)).